The primary structure comprises 189 residues: Prophage DNA-packing protein NohA (189 aa).

It belongs to the terminase small subunit family.

The chain is Prophage DNA-packing protein NohA (nohA) from Escherichia coli (strain K12).